The chain runs to 155 residues: 6,7-dimethyl-8-ribityllumazine synthase (155 aa).

5-amino-6-(D-ribitylamino)uracil-binding positions include Phe-22, 56-58, and 80-82; these read AFE and AVI. A (2S)-2-hydroxy-3-oxobutyl phosphate-binding site is contributed by 85–86; that stretch reads ST. The Proton donor role is filled by His-88. Phe-113 is a 5-amino-6-(D-ribitylamino)uracil binding site. Residue Arg-127 participates in (2S)-2-hydroxy-3-oxobutyl phosphate binding.

The protein belongs to the DMRL synthase family.

It carries out the reaction (2S)-2-hydroxy-3-oxobutyl phosphate + 5-amino-6-(D-ribitylamino)uracil = 6,7-dimethyl-8-(1-D-ribityl)lumazine + phosphate + 2 H2O + H(+). It functions in the pathway cofactor biosynthesis; riboflavin biosynthesis; riboflavin from 2-hydroxy-3-oxobutyl phosphate and 5-amino-6-(D-ribitylamino)uracil: step 1/2. Functionally, catalyzes the formation of 6,7-dimethyl-8-ribityllumazine by condensation of 5-amino-6-(D-ribitylamino)uracil with 3,4-dihydroxy-2-butanone 4-phosphate. This is the penultimate step in the biosynthesis of riboflavin. This Caldicellulosiruptor bescii (strain ATCC BAA-1888 / DSM 6725 / KCTC 15123 / Z-1320) (Anaerocellum thermophilum) protein is 6,7-dimethyl-8-ribityllumazine synthase.